We begin with the raw amino-acid sequence, 210 residues long: Glutathione S-transferase P (210 aa).

The GST N-terminal domain maps to 2 to 81 (PPYTVVYFPV…HLGRTLGLYG (80 aa)). At Tyr4 the chain carries Phosphotyrosine; by EGFR. Glutathione-binding positions include Tyr8, Arg14, Trp39, Lys45, and 52-53 (QL). Phosphothreonine is present on Thr62. 65 to 66 (QS) provides a ligand contact to glutathione. In terms of domain architecture, GST C-terminal spans 83–204 (DQREAALVDM…ASPEHVNLPI (122 aa)). N6-succinyllysine occurs at positions 103 and 116. Lys128 is modified (N6-acetyllysine).

Belongs to the GST superfamily. Pi family. As to quaternary structure, homodimer. Interacts with CDK5.

The protein localises to the cytoplasm. It localises to the mitochondrion. It is found in the nucleus. The enzyme catalyses RX + glutathione = an S-substituted glutathione + a halide anion + H(+). It carries out the reaction prostaglandin J2 + glutathione = prostaglandin J2-S-(R)-glutathione. The catalysed reaction is prostaglandin J2 + glutathione = prostaglandin J2-S-(S)-glutathione. It catalyses the reaction prostaglandin A2 + glutathione = prostaglandin A2-S-(S)-glutathione. The enzyme catalyses 11(S)-hydroxy-14(S),15(S)-epoxy-(5Z,8Z,12E)-eicosatrienoate + glutathione = (11S,15S)-dihydroxy-14(R)-S-glutathionyl-(5Z,8Z,12E)-eicosatrienoate. Functionally, conjugation of reduced glutathione to a wide number of exogenous and endogenous hydrophobic electrophiles. Involved in the formation of glutathione conjugates of both prostaglandin A2 (PGA2) and prostaglandin J2 (PGJ2). Participates in the formation of novel hepoxilin regioisomers. Negatively regulates CDK5 activity via p25/p35 translocation to prevent neurodegeneration. The sequence is that of Glutathione S-transferase P (GSTP1) from Macaca mulatta (Rhesus macaque).